The following is a 151-amino-acid chain: Transmembrane protein 239 (151 aa).

The next 3 helical transmembrane spans lie at 61-81 (LWGLEGTLYLLLALMLCHALF), 85-105 (SYLLSSLWPVVAVMWSHLLPA), and 116-138 (ALLFAASFLLLFSTLLSLVGLLT).

It localises to the membrane. The protein is Transmembrane protein 239 (Tmem239) of Mus musculus (Mouse).